A 339-amino-acid chain; its full sequence is ATP-dependent 6-phosphofructokinase (339 aa).

ATP is bound by residues Gly11, 72 to 73, and 102 to 105; these read RY and GDGS. Asp103 is a Mg(2+) binding site. Residues 125 to 127, Arg162, and 169 to 171 each bind substrate; these read TID and MGR. The active-site Proton acceptor is the Asp127. Residues 185 to 187 and 214 to 216 each bind ADP; these read GAD and KSH. Substrate contacts are provided by residues Glu223, Arg245, and 251–254; that span reads HVIR.

The protein belongs to the phosphofructokinase type A (PFKA) family. ATP-dependent PFK group I subfamily. Prokaryotic clade 'B1' sub-subfamily. In terms of assembly, homotetramer. Requires Mg(2+) as cofactor.

It localises to the cytoplasm. The enzyme catalyses beta-D-fructose 6-phosphate + ATP = beta-D-fructose 1,6-bisphosphate + ADP + H(+). It participates in carbohydrate degradation; glycolysis; D-glyceraldehyde 3-phosphate and glycerone phosphate from D-glucose: step 3/4. With respect to regulation, allosterically activated by ADP and other diphosphonucleosides, and allosterically inhibited by phosphoenolpyruvate. Catalyzes the phosphorylation of D-fructose 6-phosphate to fructose 1,6-bisphosphate by ATP, the first committing step of glycolysis. The protein is ATP-dependent 6-phosphofructokinase of Streptococcus thermophilus (strain ATCC BAA-491 / LMD-9).